Reading from the N-terminus, the 804-residue chain is MISHYPLASLLPWPPVPQLLDIDGDGGVALQRYQPRSPETGPRYWSSVQDWGEEVEEGAIYNVTLKRVQIQQAANKGARWLGAEGDRLPPGHTVSQLETCKIRSIRAGTLERLVETLLTAFGDNDLTYTSIFLSTYRAFASTQSVLELLLDRYGSFEDCEGERSQCQTGESRKAVRKALASILRAWLDQCPEDFQEPPSYPSLHRVLGFLQKAMPGSEPMRRAQSLLEQLRVQASLENETEGGFQCINPFCLGEDEEVEIDLQEDFFSFEVDLVAEQLTYMDALLFKKVVPHHCLGSIWSQRDKKDGKQSAPTIRATITQFNAVTACVVSTILRQRQIRPHLCARIIQRWIDIAQECRIRKNFSSLRAIVSALQSNPLYRLKRTWASVAKDSMQMFEELSDIFSDQNNYLTSRELLMREGTSKFASLDSCAKDHQKRSQKRLQLQKDMGAMQGTIPYLGTFLTDLTMLDTALPDQVEGGLINFEKRRREFEVIAQIKLLQSACNSYCLTPDPAFFRWFKSQPQYSEEESYVLSCEVEGLGDNSPTSPKPRKSMVKRLSLLFLGNDSTNTSSPVRESPRSPPTGSSGESMDSVSVSSSDSSPSESDGMTPTHSIDAHLKKLSESSSCNSLHSMDTSSSTASASISLASPTLPGPPCNHRRSISLTPLMSPTSPGFPPAYNTQAQDACIIRVSLEQGNGNLYKSIMLTSQDKTPAVISRAMTKHNLEGEQAADYELVQVISEERELVIPDNANVFYAMSTSANFDFLLRLRGSEGRPVQLRSRCSSTLPRTQQRSSLSLRLSKVTL.

In terms of domain architecture, N-terminal Ras-GEF spans 101–231; it reads KIRSIRAGTL…RAQSLLEQLR (131 aa). The Ras-GEF domain occupies 270 to 539; the sequence is EVDLVAEQLT…YVLSCEVEGL (270 aa). 2 disordered regions span residues 564 to 611 and 640 to 676; these read NDST…TPTH and SASI…GFPP. Composition is skewed to low complexity over residues 581–607 and 640–649; these read PTGS…SDGM and SASISLASPT. Residues 661 to 671 show a composition bias toward polar residues; that stretch reads ISLTPLMSPTS. The 88-residue stretch at 684-771 folds into the Ras-associating domain; the sequence is DACIIRVSLE…FDFLLRLRGS (88 aa).

Functionally, probable guanine nucleotide exchange factor. In Danio rerio (Zebrafish), this protein is Ral guanine nucleotide dissociation stimulator-like 1 (rgl1).